A 309-amino-acid chain; its full sequence is 2-phospho-L-lactate transferase (309 aa).

Asp50 and Lys89 together coordinate 7,8-didemethyl-8-hydroxy-5-deazariboflavin.

The protein belongs to the CofD family. As to quaternary structure, homodimer. Requires Mg(2+) as cofactor.

The catalysed reaction is (2S)-lactyl-2-diphospho-5'-guanosine + 7,8-didemethyl-8-hydroxy-5-deazariboflavin = oxidized coenzyme F420-0 + GMP + H(+). Its pathway is cofactor biosynthesis; coenzyme F420 biosynthesis. Catalyzes the transfer of the 2-phospholactate moiety from (2S)-lactyl-2-diphospho-5'-guanosine to 7,8-didemethyl-8-hydroxy-5-deazariboflavin (FO) with the formation of oxidized coenzyme F420-0 and GMP. The protein is 2-phospho-L-lactate transferase of Methanococcus maripaludis (strain C7 / ATCC BAA-1331).